Reading from the N-terminus, the 752-residue chain is Myotubularin-related protein 10 (752 aa).

One can recognise a Myotubularin phosphatase domain in the interval 206 to 636; it reads FDCSSDWDRE…SHLSVWKLYF (431 aa). A coiled-coil region spans residues 652 to 683; the sequence is TAFHKLSVLTDEIEMLQNQLRQYKGAAGTANT.

The protein belongs to the protein-tyrosine phosphatase family. Non-receptor class myotubularin subfamily.

The polypeptide is Myotubularin-related protein 10 (mtmr10) (Danio rerio (Zebrafish)).